The following is a 375-amino-acid chain: 23S rRNA (uracil(747)-C(5))-methyltransferase RlmC (375 aa).

The [4Fe-4S] cluster site is built by Cys-3, Cys-11, Cys-14, and Cys-87. 4 residues coordinate S-adenosyl-L-methionine: Gln-212, Phe-241, Glu-262, and Asn-307. The active-site Nucleophile is Cys-334.

The protein belongs to the class I-like SAM-binding methyltransferase superfamily. RNA M5U methyltransferase family. RlmC subfamily.

It catalyses the reaction uridine(747) in 23S rRNA + S-adenosyl-L-methionine = 5-methyluridine(747) in 23S rRNA + S-adenosyl-L-homocysteine + H(+). Catalyzes the formation of 5-methyl-uridine at position 747 (m5U747) in 23S rRNA. This is 23S rRNA (uracil(747)-C(5))-methyltransferase RlmC from Shigella dysenteriae serotype 1 (strain Sd197).